The chain runs to 151 residues: Ribosome maturation factor RimP (151 aa).

This sequence belongs to the RimP family.

It is found in the cytoplasm. Its function is as follows. Required for maturation of 30S ribosomal subunits. This is Ribosome maturation factor RimP from Shewanella piezotolerans (strain WP3 / JCM 13877).